The sequence spans 423 residues: MTKAYTIVIKLGSSSLVDESTKEPKLSIMTLIVETVTNLKRMGHKVIIVSSGGIAVGLDALNIPHKPKQLSEVQAIAAVGQGRLIARWNMLFSQYGEQTAQILLTRNDILRWNQYNNARNTINELLAMGVIPIVNENDTLSISEIEFGDNDTLSAITAALVGADFLFLLTDVDCLYTDNPRTNPDARPIVLVPELSEGLPGVNTSSGSGSEVGTGGMRTKLIAADLASNAGIETIVMKSDRPEYVPKIVDYIQHHFRPPRHIGNGTQQQFLDLQDTELEQLRRYDVPMHTKFLANDNKHKLKNREFWILHGLITKGAIIIDENSYDKLLSKDMASLTPNAVIEVRDNFHELECVDLKIGQRLPNGELDISKPIQSVGCVRSNYTSLELAKIKGLPSEKIHDVLGYSVSEYVAHRENIAFPPQF.

Positions 51, 138, and 150 each coordinate substrate. ATP is bound by residues 170 to 171 (TD) and 214 to 220 (TGGMRTK). One can recognise a PUA domain in the interval 315-406 (KGAIIIDENS…EKIHDVLGYS (92 aa)).

Belongs to the glutamate 5-kinase family.

It localises to the cytoplasm. This is an uncharacterized protein from Saccharomyces cerevisiae (strain ATCC 204508 / S288c) (Baker's yeast).